We begin with the raw amino-acid sequence, 206 residues long: Testis-expressed protein 38 (206 aa).

Residues 15-35 (VSLYFGILGLCSVITGGCIIF) form a helical membrane-spanning segment.

The protein localises to the membrane. This is Testis-expressed protein 38 (TEX38) from Homo sapiens (Human).